We begin with the raw amino-acid sequence, 490 residues long: 4-hydroxybutyryl-CoA dehydratase/vinylacetyl-CoA-Delta-isomerase (490 aa).

[4Fe-4S] cluster contacts are provided by Cys99 and Cys103. Residues 149–156 (MTDPKGDR) and 188–190 (HQT) contribute to the FAD site. 2 residues coordinate [4Fe-4S] cluster: His292 and Cys299. Residues His325 and 386-390 (DIAGG) contribute to the FAD site.

As to quaternary structure, homotetramer. Requires FAD as cofactor. It depends on [4Fe-4S] cluster as a cofactor.

It catalyses the reaction 4-hydroxybutanoyl-CoA = (2E)-butenoyl-CoA + H2O. It carries out the reaction vinylacetyl-CoA = (2E)-butenoyl-CoA. Its function is as follows. Catalyzes the reversible conversion of 4-hydroxybutyryl-CoA to crotonyl-CoA. The mechanism of the reaction seems to go through three steps: (1) the FAD-dependent oxidation of 4-hydroxybutyryl-CoA to 4-hydroxycrotonyl-CoA; (2) the hydroxyl group is substituted by a hydride derived from the now reduced FAD in an SN2' reaction leading to vinylacetyl-CoA; (3) isomerization to yield crotonyl-CoA. The chain is 4-hydroxybutyryl-CoA dehydratase/vinylacetyl-CoA-Delta-isomerase (abfD) from Clostridium aminobutyricum.